The primary structure comprises 335 residues: Ubiquinone biosynthesis protein COQ4, mitochondrial (335 aa).

The N-terminal 10 residues, 1–10 (MLRLSLLRST), are a transit peptide targeting the mitochondrion. 4 residues coordinate Zn(2+): His-210, Asp-211, His-214, and Glu-226.

This sequence belongs to the COQ4 family. In terms of assembly, component of a multi-subunit COQ enzyme complex, composed of at least COQ3, COQ4, COQ5, COQ6, COQ7 and COQ9. Interacts with COQ3. Zn(2+) serves as cofactor.

It localises to the mitochondrion inner membrane. The catalysed reaction is 4-hydroxy-3-methoxy-5-(all-trans-hexaprenyl)benzoate + H(+) = 2-methoxy-6-(all-trans-hexaprenyl)phenol + CO2. It participates in cofactor biosynthesis; ubiquinone biosynthesis. Functionally, lyase that catalyzes the C1-decarboxylation of 4-hydroxy-3-methoxy-5-(all-trans-hexaprenyl)benzoic acid into 2-methoxy-6-(all-trans-hexaprenyl)phenol during ubiquinone biosynthesis. The chain is Ubiquinone biosynthesis protein COQ4, mitochondrial from Saccharomyces cerevisiae (strain RM11-1a) (Baker's yeast).